We begin with the raw amino-acid sequence, 587 residues long: Arginine--tRNA ligase (587 aa).

The short motif at 127-137 (PNLAKEMHVGH) is the 'HIGH' region element.

Belongs to the class-I aminoacyl-tRNA synthetase family. Monomer.

Its subcellular location is the cytoplasm. It carries out the reaction tRNA(Arg) + L-arginine + ATP = L-arginyl-tRNA(Arg) + AMP + diphosphate. The chain is Arginine--tRNA ligase from Pseudomonas aeruginosa (strain LESB58).